The chain runs to 354 residues: DNA integrity scanning protein DisA (354 aa).

The region spanning 6–144 (GMKIKDTLKI…GDIKYVLRDS (139 aa)) is the DAC domain. Residues Gly-73, Leu-91, and 104 to 108 (TRHRT) each bind ATP.

This sequence belongs to the DisA family. Homooctamer. Mg(2+) serves as cofactor.

It catalyses the reaction 2 ATP = 3',3'-c-di-AMP + 2 diphosphate. In terms of biological role, participates in a DNA-damage check-point that is active prior to asymmetric division when DNA is damaged. DisA forms globular foci that rapidly scan along the chromosomes during sporulation, searching for lesions. When a lesion is present, DisA pauses at the lesion site. This triggers a cellular response that culminates in a temporary block in sporulation initiation. Also has diadenylate cyclase activity, catalyzing the condensation of 2 ATP molecules into cyclic di-AMP (c-di-AMP). c-di-AMP acts as a signaling molecule that couples DNA integrity with progression of sporulation. The rise in c-di-AMP level generated by DisA while scanning the chromosome, operates as a positive signal that advances sporulation; upon encountering a lesion, the DisA focus arrests at the damaged site and halts c-di-AMP synthesis. This is DNA integrity scanning protein DisA from Clostridium botulinum (strain Alaska E43 / Type E3).